The primary structure comprises 75 residues: Small ribosomal subunit protein bS18c (75 aa).

The protein belongs to the bacterial ribosomal protein bS18 family. As to quaternary structure, part of the 30S ribosomal subunit.

Its subcellular location is the plastid. This is Small ribosomal subunit protein bS18c from Aneura mirabilis (Parasitic liverwort).